A 567-amino-acid chain; its full sequence is Microtubule-associated protein 70-1 (567 aa).

A coiled-coil region spans residues 38 to 341 (VRVELTRLEN…AARSEAQLKD (304 aa)). The tract at residues 220–440 (ILDRMHRQKV…SGMNVSTDSS (221 aa)) is required for targeting to microtubules. Disordered regions lie at residues 425–457 (KGHVNGSGMNVSTDSSEDKESNNSDEKANEFTS) and 534–567 (LEKEQDNKAKRFGSSSSQLPPGRTLPRSGSARNM). Over residues 440–453 (SEDKESNNSDEKAN) the composition is skewed to basic and acidic residues. Residues 516 to 545 (KKRRMEVAAMEKEMAALRLEKEQDNKAKRF) adopt a coiled-coil conformation.

It belongs to the MAP70 family.

It is found in the cytoplasm. The protein localises to the cytoskeleton. Plant-specific protein that interact with microtubules. In Oryza sativa subsp. japonica (Rice), this protein is Microtubule-associated protein 70-1 (MAP70.1).